The primary structure comprises 38 residues: Mating hormone A-factor 2 (38 aa).

Residues 1-12 are compositionally biased toward polar residues; it reads MQPITTASTQAT. Residues 1 to 20 are disordered; the sequence is MQPITTASTQATQKDKSSEK. The propeptide occupies 1–23; that stretch reads MQPITTASTQATQKDKSSEKKDN. Cys35 is subject to Cysteine methyl ester. Cys35 carries the S-farnesyl cysteine lipid modification. A propeptide spans 36–38 (removed in mature form); sequence VIA.

The protein localises to the cell membrane. Its function is as follows. The active factor is excreted into the culture medium by haploid cells of the A mating type and acts on cells of the opposite mating type (type alpha). It mediates the conjugation process between the two types by inhibiting the initiation of DNA synthesis in type alpha cells and synchronizing them with type A. The sequence is that of Mating hormone A-factor 2 (MFA2) from Saccharomyces cerevisiae (strain ATCC 204508 / S288c) (Baker's yeast).